We begin with the raw amino-acid sequence, 525 residues long: Chromaffin granule amine transporter (525 aa).

At 1–21 (MLRTILDAPQRLLKEGRASRQ) the chain is on the cytoplasmic side. Residues 22 to 42 (LVLVVVFVALLLDNMLFTVVV) form a helical membrane-spanning segment. The Lumenal, vesicle portion of the chain corresponds to 43–138 (PIVPTFLYDM…TGFLEEEITR (96 aa)). N-linked (GlcNAc...) asparagine glycosylation is found at asparagine 58, asparagine 87, and asparagine 104. A helical membrane pass occupies residues 139–158 (VGVLFASKAVMQLLVNPFVG). The Cytoplasmic portion of the chain corresponds to 159 to 167 (PLTNRIGYH). A helical transmembrane segment spans residues 168–188 (IPMFAGFVIMFLSTVMFAFSG). The Lumenal, vesicle segment spans residues 189-197 (TYTLLFVAR). Residues 198–218 (TLQGIGSSFSSVAGLGMLASV) form a helical membrane-spanning segment. Residues 219-227 (YTDDHERGR) are Cytoplasmic-facing. The chain crosses the membrane as a helical span at residues 228–250 (AMGTALGGLALGLLVGAPFGSVM). Topologically, residues 251 to 256 (YEFVGK) are lumenal, vesicle. The helical transmembrane segment at 257-279 (SAPFLILAFLALLDGALQLCILQ) threads the bilayer. Topologically, residues 280–299 (PSKVSPESAKGTPLFMLLKD) are cytoplasmic. A helical membrane pass occupies residues 300-319 (PYILVAAGSICFANMGVAIL). The Lumenal, vesicle segment spans residues 320–335 (EPTLPIWMMQTMCSPK). Residues 336 to 360 (WQLGLAFLPASVSYLIGTNLFGVLA) traverse the membrane as a helical segment. The Cytoplasmic segment spans residues 361-365 (NKMGR). Residues 366–386 (WLCSLIGMLVVGTSLLCVPLA) form a helical membrane-spanning segment. Residues 387-397 (HNIFGLIGPNA) are Lumenal, vesicle-facing. Residues 398 to 418 (GLGLAIGMVDSSMMPIMGHLV) traverse the membrane as a helical segment. Over 419–422 (DLRH) the chain is Cytoplasmic. The helical transmembrane segment at 423–443 (TSVYGSVYAIADVAFCMGFAI) threads the bilayer. At 444–448 (GPSTG) the chain is on the lumenal, vesicle side. A helical transmembrane segment spans residues 449 to 470 (GAIVKAIGFPWLMVITGVINIV). Residues 471-525 (YAPLCYYLRSPPAKEEKLAILSQDCPMETRMYATQKPTKEFPLGEDSDEEPDHEE) are Cytoplasmic-facing. The segment at 503 to 525 (ATQKPTKEFPLGEDSDEEPDHEE) is disordered. Over residues 513–525 (LGEDSDEEPDHEE) the composition is skewed to acidic residues.

It belongs to the major facilitator superfamily. Vesicular transporter family. Expressed primarily in neuroendocrine tissues. Highly expressed in chromaffin cells of the adrenal medulla (at protein level). Detected in peripheral sympathetic ganglia (at protein level). Found in some paracrine cells in stomach and duodenum (at protein level). Expressed in substantia nigra. In terms of tissue distribution, expressed in gastrointestinal tract.

It is found in the cytoplasmic vesicle. Its subcellular location is the secretory vesicle membrane. The protein resides in the secretory vesicle. It localises to the synaptic vesicle membrane. The protein localises to the endoplasmic reticulum membrane. The catalysed reaction is serotonin(in) + 2 H(+)(out) = serotonin(out) + 2 H(+)(in). The enzyme catalyses (R)-noradrenaline(in) + 2 H(+)(out) = (R)-noradrenaline(out) + 2 H(+)(in). It carries out the reaction dopamine(in) + 2 H(+)(out) = dopamine(out) + 2 H(+)(in). Its activity is regulated as follows. Strongly inhibited by reserpine. Also inhibited to a lesser extent by ketanserin and fenfluramine. Not significantly inhibited by tetrabenazine. Functionally, electrogenic antiporter that exchanges one cationic monoamine with two intravesicular protons across the membrane of secretory and synaptic vesicles. Uses the electrochemical proton gradient established by the V-type proton-pump ATPase to accumulate high concentrations of monoamines inside the vesicles prior to their release via exocytosis. Transports catecholamines and indolamines with higher affinity for serotonin. Regulates the transvesicular monoaminergic gradient that determines the quantal size. Mediates presynaptic monoaminergic vesicle transport in the amygdala and prefrontal brain regions related with emotion processing in response to environmental stimuli. Unable to uptake serotonin. This Homo sapiens (Human) protein is Chromaffin granule amine transporter (SLC18A1).